The sequence spans 481 residues: Glucokinase-1 (481 aa).

Residues 4–477 form the Hexokinase domain; it reads PKLTKAVDSI…SGVGAALCAL (474 aa). Residues 64–204 form a hexokinase small subdomain region; the sequence is SGQEHGVTML…LSNVHVVALT (141 aa). K101 is an ATP binding site. The glucose-binding stretch occupies residues 146-172; it reads KMGFTFSYPVDQTSLSSGKLIRWTKGF. The segment at 205 to 466 is hexokinase large subdomain; that stretch reads NDTTGTLLAR…RDVHLRISKD (262 aa). 466 to 471 provides a ligand contact to ATP; that stretch reads DGSGVG.

Belongs to the hexokinase family.

It catalyses the reaction D-glucose + ATP = D-glucose 6-phosphate + ADP + H(+). The catalysed reaction is a D-hexose + ATP = a D-hexose 6-phosphate + ADP + H(+). The enzyme catalyses D-mannose + ATP = D-mannose 6-phosphate + ADP + H(+). Its pathway is carbohydrate metabolism; hexose metabolism. It functions in the pathway carbohydrate degradation; glycolysis; D-glyceraldehyde 3-phosphate and glycerone phosphate from D-glucose: step 1/4. Its function is as follows. Glukokinase specific for aldohexoses. Phosphorylates glucose and mannose, but not fructose. In Kluyveromyces lactis (strain ATCC 8585 / CBS 2359 / DSM 70799 / NBRC 1267 / NRRL Y-1140 / WM37) (Yeast), this protein is Glucokinase-1 (GLK1).